A 194-amino-acid polypeptide reads, in one-letter code: ATP-dependent Clp protease proteolytic subunit (194 aa).

Serine 98 acts as the Nucleophile in catalysis. Histidine 123 is an active-site residue.

This sequence belongs to the peptidase S14 family. Fourteen ClpP subunits assemble into 2 heptameric rings which stack back to back to give a disk-like structure with a central cavity, resembling the structure of eukaryotic proteasomes.

The protein localises to the cytoplasm. The enzyme catalyses Hydrolysis of proteins to small peptides in the presence of ATP and magnesium. alpha-casein is the usual test substrate. In the absence of ATP, only oligopeptides shorter than five residues are hydrolyzed (such as succinyl-Leu-Tyr-|-NHMec, and Leu-Tyr-Leu-|-Tyr-Trp, in which cleavage of the -Tyr-|-Leu- and -Tyr-|-Trp bonds also occurs).. In terms of biological role, cleaves peptides in various proteins in a process that requires ATP hydrolysis. Has a chymotrypsin-like activity. Plays a major role in the degradation of misfolded proteins. In Syntrophus aciditrophicus (strain SB), this protein is ATP-dependent Clp protease proteolytic subunit.